The following is a 211-amino-acid chain: ATP-dependent dethiobiotin synthetase BioD 2 (211 aa).

ATP is bound at residue 13 to 18; it reads DIGKTI. Thr-17 is a Mg(2+) binding site. Lys-38 is a catalytic residue. Residue Thr-42 participates in substrate binding. Residues Asp-50, 115-118, and 175-176 contribute to the ATP site; these read EGAG and NT. Mg(2+) is bound by residues Asp-50 and Glu-115.

Belongs to the dethiobiotin synthetase family. Homodimer. Mg(2+) is required as a cofactor.

It localises to the cytoplasm. The enzyme catalyses (7R,8S)-7,8-diammoniononanoate + CO2 + ATP = (4R,5S)-dethiobiotin + ADP + phosphate + 3 H(+). It functions in the pathway cofactor biosynthesis; biotin biosynthesis; biotin from 7,8-diaminononanoate: step 1/2. Its function is as follows. Catalyzes a mechanistically unusual reaction, the ATP-dependent insertion of CO2 between the N7 and N8 nitrogen atoms of 7,8-diaminopelargonic acid (DAPA, also called 7,8-diammoniononanoate) to form a ureido ring. The chain is ATP-dependent dethiobiotin synthetase BioD 2 from Haemophilus ducreyi (strain 35000HP / ATCC 700724).